We begin with the raw amino-acid sequence, 123 residues long: Galectin-2 (123 aa).

One can recognise a Galectin domain in the interval 4-123 (KVEIMNMDMK…LRYLSVQGGF (120 aa)). 65 to 71 (WGKEQRD) lines the a beta-D-galactoside pocket.

Homodimer.

Its function is as follows. This protein binds beta-galactoside. Its physiological function is not yet known. The protein is Galectin-2 (LGALS2) of Sus scrofa (Pig).